Reading from the N-terminus, the 81-residue chain is MKQGIHPDFQKVVFMDSATGAKFLAGSTLKPEETVDYEGETYPLVRVEVSSDSHPFYTGKQKFAQADGRIEKFNKKYGLKK.

It belongs to the bacterial ribosomal protein bL31 family. Type B subfamily. As to quaternary structure, part of the 50S ribosomal subunit.

In Lactobacillus helveticus (strain DPC 4571), this protein is Large ribosomal subunit protein bL31B.